Reading from the N-terminus, the 175-residue chain is Ribosome maturation factor RimM (175 aa).

The 75-residue stretch at 93 to 167 (DDEFYYSDLI…YIIITLPEVI (75 aa)) folds into the PRC barrel domain.

It belongs to the RimM family. Binds ribosomal protein uS19.

Its subcellular location is the cytoplasm. Functionally, an accessory protein needed during the final step in the assembly of 30S ribosomal subunit, possibly for assembly of the head region. Essential for efficient processing of 16S rRNA. May be needed both before and after RbfA during the maturation of 16S rRNA. It has affinity for free ribosomal 30S subunits but not for 70S ribosomes. This is Ribosome maturation factor RimM from Ehrlichia chaffeensis (strain ATCC CRL-10679 / Arkansas).